The following is a 358-amino-acid chain: S-adenosylmethionine:tRNA ribosyltransferase-isomerase (358 aa).

The protein belongs to the QueA family. Monomer.

Its subcellular location is the cytoplasm. It carries out the reaction 7-aminomethyl-7-carbaguanosine(34) in tRNA + S-adenosyl-L-methionine = epoxyqueuosine(34) in tRNA + adenine + L-methionine + 2 H(+). It participates in tRNA modification; tRNA-queuosine biosynthesis. Its function is as follows. Transfers and isomerizes the ribose moiety from AdoMet to the 7-aminomethyl group of 7-deazaguanine (preQ1-tRNA) to give epoxyqueuosine (oQ-tRNA). In Chelativorans sp. (strain BNC1), this protein is S-adenosylmethionine:tRNA ribosyltransferase-isomerase.